Here is a 292-residue protein sequence, read N- to C-terminus: ATP synthase gamma chain (292 aa).

The protein belongs to the ATPase gamma chain family. As to quaternary structure, F-type ATPases have 2 components, CF(1) - the catalytic core - and CF(0) - the membrane proton channel. CF(1) has five subunits: alpha(3), beta(3), gamma(1), delta(1), epsilon(1). CF(0) has three main subunits: a, b and c.

Its subcellular location is the cell membrane. Its function is as follows. Produces ATP from ADP in the presence of a proton gradient across the membrane. The gamma chain is believed to be important in regulating ATPase activity and the flow of protons through the CF(0) complex. The protein is ATP synthase gamma chain of Streptococcus pneumoniae (strain JJA).